A 179-amino-acid chain; its full sequence is Large ribosomal subunit protein bL17 (179 aa).

A compositionally biased stretch (basic and acidic residues) spans 123–161; it reads KEKDTKKKDDSKKSDDKKTSKKEAGFKSSKGESEHKKNT. The tract at residues 123–179 is disordered; that stretch reads KEKDTKKKDDSKKSDDKKTSKKEAGFKSSKGESEHKKNTDQVVDSSSNRRYNRVKGS. Polar residues predominate over residues 162–171; the sequence is DQVVDSSSNR.

It belongs to the bacterial ribosomal protein bL17 family. As to quaternary structure, part of the 50S ribosomal subunit. Contacts protein L32.

This is Large ribosomal subunit protein bL17 from Treponema denticola (strain ATCC 35405 / DSM 14222 / CIP 103919 / JCM 8153 / KCTC 15104).